Consider the following 126-residue polypeptide: Fluoride-specific ion channel FluC (126 aa).

4 helical membrane-spanning segments follow: residues 1–21 (MIVIFVGLAGVLGALMRFGLD), 40–60 (LATLSVNVLGSFIIGLAGGFA), 72–92 (AISIGIAGGLTTFSSFAVATV), and 104–124 (MVNIGLNLVLGLGAAWLGLSL). Na(+) contacts are provided by glycine 79 and threonine 82.

It belongs to the fluoride channel Fluc/FEX (TC 1.A.43) family.

Its subcellular location is the cell membrane. It carries out the reaction fluoride(in) = fluoride(out). With respect to regulation, na(+) is not transported, but it plays an essential structural role and its presence is essential for fluoride channel function. Fluoride-specific ion channel. Important for reducing fluoride concentration in the cell, thus reducing its toxicity. The chain is Fluoride-specific ion channel FluC from Renibacterium salmoninarum (strain ATCC 33209 / DSM 20767 / JCM 11484 / NBRC 15589 / NCIMB 2235).